Here is a 377-residue protein sequence, read N- to C-terminus: Diels-Alderase fsa2 (377 aa).

It belongs to the Diels-Alderase family.

The catalysed reaction is (5S)-3-[(2E,6R,8E,10E,12E)-2,6-dimethyltetradeca-2,8,10,12-tetraenoyl]-5-(hydroxymethyl)pyrrolidine-2,4-dione = trichosetin. It participates in mycotoxin biosynthesis. Functionally, diels-Alderase; part of the gene cluster that mediates the biosynthesis of equisetin, a trans-fused decalin-containing tetramic acid with antimicrobial activity. The PKS module of eqxS together with the enoylreductase eqxC catalyze the formation of the polyketide unit which is then conjugated to L-serine by the condensation domain of the eqxS NRPS module. Activity of the Dieckmann cyclase domain (RED) results in release of the Dieckmann product intermediate. Diels-Alderase eqx3 is involved in endo-selective Diels-Alder cycloaddition to form the decalin ring, leading to the production of N-desmethylequisetin also called trichosetin. Subsequent N-methylation is carried out by eqxD to give equisetin. The chain is Diels-Alderase fsa2 from Fusarium heterosporum.